Here is a 151-residue protein sequence, read N- to C-terminus: Probable flavodoxin 2 (151 aa).

The Flavodoxin-like domain maps to 4–144 (ILLVYATMSG…ELINFGRQFA (141 aa)). FMN contacts are provided by residues 10 to 14 (TMSGN) and 88 to 119 (VFGSGDTAYEFFCGAVDTLEAKIKERGGDIVL).

This sequence belongs to the flavodoxin family. Requires FMN as cofactor.

Low-potential electron donor to a number of redox enzymes. The chain is Probable flavodoxin 2 (ykuP) from Bacillus subtilis (strain 168).